The chain runs to 160 residues: MLVLLAGLFVVHIATAIMLFVSTIANVWMVADYANASVGLWKNCTGGNCDGSLSYGNEDAIKAVQAFMILSIIFSIISLVVFVFQLFTMEKGNRFFLSGSTMLVCWLCILVGVSIYTHHYAHSEGNFNSSSHQGYCFILTWICFCFSFIIGILYMVLRKK.

The helical transmembrane segment at 1–21 (MLVLLAGLFVVHIATAIMLFV) threads the bilayer. N-linked (GlcNAc...) asparagine glycosylation is found at N35 and N43. 2 helical membrane passes run 67–87 (FMIL…FQLF) and 95–115 (FFLS…GVSI). The N-linked (GlcNAc...) asparagine glycan is linked to N128. The chain crosses the membrane as a helical span at residues 137–157 (FILTWICFCFSFIIGILYMVL).

This sequence belongs to the PMP-22/EMP/MP20 family.

It localises to the membrane. This chain is Epithelial membrane protein 1 (Emp1), found in Mus musculus (Mouse).